Consider the following 348-residue polypeptide: GTP 3',8-cyclase (348 aa).

The Radical SAM core domain occupies 24 to 248 (PFGRAVTYLR…TDIDYQTGGP (225 aa)). Residue R33 participates in GTP binding. [4Fe-4S] cluster-binding residues include C40 and C44. Residue Y46 participates in S-adenosyl-L-methionine binding. C47 lines the [4Fe-4S] cluster pocket. R82 contributes to the GTP binding site. G86 contacts S-adenosyl-L-methionine. T115 serves as a coordination point for GTP. An S-adenosyl-L-methionine-binding site is contributed by S139. K175 contributes to the GTP binding site. S-adenosyl-L-methionine is bound at residue M209. [4Fe-4S] cluster is bound by residues C272 and C275. 277-279 (RVR) serves as a coordination point for GTP. C289 contacts [4Fe-4S] cluster.

The protein belongs to the radical SAM superfamily. MoaA family. Monomer and homodimer. [4Fe-4S] cluster serves as cofactor.

It carries out the reaction GTP + AH2 + S-adenosyl-L-methionine = (8S)-3',8-cyclo-7,8-dihydroguanosine 5'-triphosphate + 5'-deoxyadenosine + L-methionine + A + H(+). It participates in cofactor biosynthesis; molybdopterin biosynthesis. Catalyzes the cyclization of GTP to (8S)-3',8-cyclo-7,8-dihydroguanosine 5'-triphosphate. The protein is GTP 3',8-cyclase of Rhizobium etli (strain ATCC 51251 / DSM 11541 / JCM 21823 / NBRC 15573 / CFN 42).